Consider the following 302-residue polypeptide: MNILLLAGGWSSEREVSLQSAELITSAMIEYGHTVTCLDPLYDFDKIVEVAEKQDVAFILLHGSPGEDGILQALLERVGCPYQGASPAGSLLALHKAAAKALFRREGLLTPKSVFLPLKPEVTWEPGLNYPIFVKSNIGGSSVNVHLVTNYEELFIAMEALFNAGEEVLLEEAIIGQEVTCGVIDDQALPPILIRSQGKFFDYYNKYAKNGAEEICPAPLEPHVLKHIQEYALRAHNTLNLQGCSRADFILRDDELLFLLEVNTIPGMSATSLVPREAAAMGLTFPELVEKLIQLAIRDHRK.

Residues Lys-100–Gln-294 enclose the ATP-grasp domain. Gly-127 to Thr-180 lines the ATP pocket. Residues Asp-248, Glu-261, and Asn-263 each contribute to the Mg(2+) site.

It belongs to the D-alanine--D-alanine ligase family. Mg(2+) is required as a cofactor. It depends on Mn(2+) as a cofactor.

The protein localises to the cytoplasm. The enzyme catalyses 2 D-alanine + ATP = D-alanyl-D-alanine + ADP + phosphate + H(+). The protein operates within cell wall biogenesis; peptidoglycan biosynthesis. Its function is as follows. Cell wall formation. In Lawsonia intracellularis (strain PHE/MN1-00), this protein is D-alanine--D-alanine ligase.